Here is an 80-residue protein sequence, read N- to C-terminus: 17 kDa surface antigen (80 aa).

The span at 47-58 shows a compositional bias: polar residues; it reads ALETTPSGTSIE. Residues 47-80 form a disordered region; sequence ALETTPSGTSIEWRNPDNGNYGYVTPSKTYKNST.

Belongs to the rickettsiale 17 kDa surface antigen family.

Its subcellular location is the cell outer membrane. The chain is 17 kDa surface antigen (omp) from Rickettsia canadensis.